Here is a 641-residue protein sequence, read N- to C-terminus: Sodium-dependent nutrient amino acid transporter 1 (641 aa).

Over residues 1–21 the composition is skewed to polar residues; sequence MELKNIEQQPQLQNGNGTATE. Positions 1–37 are disordered; it reads MELKNIEQQPQLQNGNGTATENNEKGEQKPTEGGERT. Residues 1–38 lie on the Cytoplasmic side of the membrane; it reads MELKNIEQQPQLQNGNGTATENNEKGEQKPTEGGERTN. Positions 22–35 are enriched in basic and acidic residues; that stretch reads NNEKGEQKPTEGGE. 3 helical membrane-spanning segments follow: residues 39-59, 72-92, and 125-145; these read WGNG…LGNV, GAFL…MYYL, and TVCI…YLFV. N181, N190, and N198 each carry an N-linked (GlcNAc...) asparagine glycan. Helical transmembrane passes span 229–249, 258–278, 307–327, 341–361, 401–421, 441–461, 474–494, 516–536, and 552–572; these read PDWK…LVIM, AAYF…GRAV, AVVQ…MFAS, IVTT…FAIL, LFSV…IVAL, VALV…TPGG, TYVV…IYGL, CWSF…MATI, and IAGW…GIWY.

Belongs to the sodium:neurotransmitter symporter (SNF) (TC 2.A.22) family.

The protein resides in the membrane. In terms of biological role, unusual broad substrate spectrum amino acid:sodium cotransporter that promotes absorption of the D isomers of essential amino acids. Neutral amino acids are the preferred substrates, especially methionine and phenylalanine. This is Sodium-dependent nutrient amino acid transporter 1 from Drosophila willistoni (Fruit fly).